The following is a 124-amino-acid chain: SPbeta prophage-derived uncharacterized protein YoqO (124 aa).

2 helical membrane-spanning segments follow: residues 54–74 and 88–108; these read LVVICLTFFVLALGIHKLLSF and VIFILQITLIIGSVAIAISIM.

Its subcellular location is the cell membrane. The protein is SPbeta prophage-derived uncharacterized protein YoqO (yoqO) of Bacillus subtilis (strain 168).